The primary structure comprises 427 residues: Probable protein phosphatase 2C 64 (427 aa).

The tract at residues 1–36 (MGNCVARSGTAVDAGGDGGEDGKRRRRRWKAPREDQ) is disordered. Residues 53-331 (TATVYTQQGR…DDCAVVCLYL (279 aa)) enclose the PPM-type phosphatase domain. Mn(2+)-binding residues include aspartate 89, glycine 90, aspartate 276, and aspartate 322.

It belongs to the PP2C family. Requires Mg(2+) as cofactor. It depends on Mn(2+) as a cofactor.

It catalyses the reaction O-phospho-L-seryl-[protein] + H2O = L-seryl-[protein] + phosphate. It carries out the reaction O-phospho-L-threonyl-[protein] + H2O = L-threonyl-[protein] + phosphate. In Oryza sativa subsp. japonica (Rice), this protein is Probable protein phosphatase 2C 64.